A 544-amino-acid chain; its full sequence is CTP synthase (544 aa).

Residues methionine 1 to leucine 265 are amidoligase domain. Serine 13 contacts CTP. Serine 13 provides a ligand contact to UTP. ATP is bound by residues serine 14–isoleucine 19 and aspartate 71. Mg(2+) is bound by residues aspartate 71 and glutamate 139. Residues aspartate 146–glutamate 148, lysine 186–glutamine 191, and lysine 222 contribute to the CTP site. UTP-binding positions include lysine 186 to glutamine 191 and lysine 222. A Glutamine amidotransferase type-1 domain is found at lysine 290–alanine 544. Glycine 353 contacts L-glutamine. The Nucleophile; for glutamine hydrolysis role is filled by cysteine 380. L-glutamine is bound by residues leucine 381 to glutamine 384, glutamate 404, and arginine 471. Active-site residues include histidine 517 and glutamate 519.

The protein belongs to the CTP synthase family. As to quaternary structure, homotetramer.

The catalysed reaction is UTP + L-glutamine + ATP + H2O = CTP + L-glutamate + ADP + phosphate + 2 H(+). It catalyses the reaction L-glutamine + H2O = L-glutamate + NH4(+). It carries out the reaction UTP + NH4(+) + ATP = CTP + ADP + phosphate + 2 H(+). It participates in pyrimidine metabolism; CTP biosynthesis via de novo pathway; CTP from UDP: step 2/2. Allosterically activated by GTP, when glutamine is the substrate; GTP has no effect on the reaction when ammonia is the substrate. The allosteric effector GTP functions by stabilizing the protein conformation that binds the tetrahedral intermediate(s) formed during glutamine hydrolysis. Inhibited by the product CTP, via allosteric rather than competitive inhibition. Functionally, catalyzes the ATP-dependent amination of UTP to CTP with either L-glutamine or ammonia as the source of nitrogen. Regulates intracellular CTP levels through interactions with the four ribonucleotide triphosphates. The sequence is that of CTP synthase from Neisseria meningitidis serogroup C / serotype 2a (strain ATCC 700532 / DSM 15464 / FAM18).